The sequence spans 556 residues: Cholesterol oxidase (556 aa).

FAD is bound by residues Gly-18, Glu-37, Gly-88, Ala-93, and Val-235. Residue His-471 is the Proton acceptor of the active site. Residue Gly-504 participates in FAD binding.

This sequence belongs to the GMC oxidoreductase family. The cofactor is FAD.

The enzyme catalyses cholesterol + O2 = cholest-5-en-3-one + H2O2. It catalyses the reaction cholest-5-en-3-one = cholest-4-en-3-one. It functions in the pathway steroid metabolism; cholesterol degradation. Its function is as follows. Bifunctional enzyme that catalyzes the oxidation and isomerization of cholesterol to cholestenone (cholest-4-en-3-one), an initial step in the cholesterol degradation process. In Acinetobacter baumannii, this protein is Cholesterol oxidase.